Reading from the N-terminus, the 183-residue chain is NADH-ubiquinone oxidoreductase 20.8 kDa subunit (183 aa).

CHCH domains lie at 44–87 and 88–130; these read GARC…IADI and NKSC…LGLK. 4 short sequence motifs (cx9C motif) span residues 47 to 57, 69 to 79, 91 to 101, and 112 to 122; these read CRDYNDDFMQC, CLKEGRRVTRC, CLEEFRKHWTC, and CRPAEWKLNKC. 4 disulfide bridges follow: cysteine 47-cysteine 79, cysteine 57-cysteine 69, cysteine 91-cysteine 122, and cysteine 101-cysteine 112. The disordered stretch occupies residues 161–183; it reads EPFVPPTQTGDNNKAPAAASSSS.

This sequence belongs to the complex I NDUFA8 subunit family. In terms of assembly, complex I is composed of about 40 different subunits. This is a component of the hydrophobic fraction. It depends on iron-sulfur cluster as a cofactor.

It localises to the mitochondrion inner membrane. Accessory subunit of the mitochondrial membrane respiratory chain NADH dehydrogenase (Complex I), that is believed not to be involved in catalysis. Complex I functions in the transfer of electrons from NADH to the respiratory chain. The immediate electron acceptor for the enzyme is believed to be ubiquinone. This is NADH-ubiquinone oxidoreductase 20.8 kDa subunit from Neurospora crassa (strain ATCC 24698 / 74-OR23-1A / CBS 708.71 / DSM 1257 / FGSC 987).